Reading from the N-terminus, the 207-residue chain is Large ribosomal subunit protein uL4 (207 aa).

A compositionally biased stretch (basic and acidic residues) spans 44-58; the sequence is RAPTRATRERSDVAR. The disordered stretch occupies residues 44 to 82; the sequence is RAPTRATRERSDVARSGKKFGRQKGGGTARHGDRRSPIF.

Belongs to the universal ribosomal protein uL4 family. Part of the 50S ribosomal subunit.

One of the primary rRNA binding proteins, this protein initially binds near the 5'-end of the 23S rRNA. It is important during the early stages of 50S assembly. It makes multiple contacts with different domains of the 23S rRNA in the assembled 50S subunit and ribosome. In terms of biological role, forms part of the polypeptide exit tunnel. This Zymomonas mobilis subsp. mobilis (strain ATCC 31821 / ZM4 / CP4) protein is Large ribosomal subunit protein uL4.